Reading from the N-terminus, the 148-residue chain is SsrA-binding protein (148 aa).

The segment covering 129-142 has biased composition (basic and acidic residues); it reads ETEKKRDWEREKAR. Residues 129–148 form a disordered region; it reads ETEKKRDWEREKARIMRAGT.

It belongs to the SmpB family.

The protein resides in the cytoplasm. Functionally, required for rescue of stalled ribosomes mediated by trans-translation. Binds to transfer-messenger RNA (tmRNA), required for stable association of tmRNA with ribosomes. tmRNA and SmpB together mimic tRNA shape, replacing the anticodon stem-loop with SmpB. tmRNA is encoded by the ssrA gene; the 2 termini fold to resemble tRNA(Ala) and it encodes a 'tag peptide', a short internal open reading frame. During trans-translation Ala-aminoacylated tmRNA acts like a tRNA, entering the A-site of stalled ribosomes, displacing the stalled mRNA. The ribosome then switches to translate the ORF on the tmRNA; the nascent peptide is terminated with the 'tag peptide' encoded by the tmRNA and targeted for degradation. The ribosome is freed to recommence translation, which seems to be the essential function of trans-translation. The polypeptide is SsrA-binding protein (Burkholderia lata (strain ATCC 17760 / DSM 23089 / LMG 22485 / NCIMB 9086 / R18194 / 383)).